The sequence spans 2435 residues: Highly reducing polyketide synthase ATR6 (2435 aa).

The 433-residue stretch at 18–450 (AEPIAIVSAA…GSNAHVVLDN (433 aa)) folds into the Ketosynthase family 3 (KS3) domain. Residues cysteine 192, histidine 331, and histidine 371 each act as for beta-ketoacyl synthase activity in the active site. Positions 586 to 883 (FVFTGQGAQW…EIGPSAALGG (298 aa)) are malonyl-CoA:ACP transacylase (MAT) domain. The For malonyltransferase activity role is filled by serine 682. The N-terminal hotdog fold stretch occupies residues 979-1125 (HDLLGGKVLG…GLVRLALNAS (147 aa)). The interval 979–1291 (HDLLGGKVLG…LRGISMTSVG (313 aa)) is dehydratase (DH) domain. In terms of domain architecture, PKS/mFAS DH spans 979–1296 (HDLLGGKVLG…MTSVGLQGNV (318 aa)). Catalysis depends on histidine 1011, which acts as the For beta-hydroxyacyl dehydratase activity. The C-terminal hotdog fold stretch occupies residues 1141-1296 (QYPTPARFWY…MTSVGLQGNV (156 aa)). An enoylreductase (ER) domain region spans residues 1724–2037 (GILDTLHFAE…DHNRLRNVVI (314 aa)). Positions 2062–2301 (PEQTYLLVGK…ITGIAVPQPG (240 aa)) are catalytic ketoreductase (KRc) domain. A Carrier domain is found at 2353-2429 (VLLSSAVGVL…VLCQKIISRM (77 aa)). The residue at position 2389 (serine 2389) is an O-(pantetheine 4'-phosphoryl)serine.

Its pathway is mycotoxin biosynthesis. Highly reducing polyketide synthase; part of the core atranone cluster (CAC) which products are predicted to catalyze most or all steps of mycotoxin atranone synthesis, starting from geranylgeranyl pyrophosphate (GGPP). The initial cyclization of GGPP to dolabellane is probably performed by the terpene cyclase ATR13. The Baeyer-Villiger oxidation near the end of the atranone synthesis, which converts atranones D and E to atranones F and G is predicted to be catalyzed by the monooxygenase ATR8. Of the CAC's other predicted gene products, the reducing PKS ATR6 might synthesize a polyketide chain. This polyketide is probably transferred onto the atranone backbone by the polyketide transferase ATR5. Other predicted CAC products include 4 oxygenases (ATR2, ATR3, ATR4, and ATR14), 3 short-chain reductases (ATR7, ATR9, and ATR10), and a methyltransferase (ATR12). These may all be involved in the various steps of atranone biosynthesis, although their specific roles must await experimental determination. The protein is Highly reducing polyketide synthase ATR6 of Stachybotrys chlorohalonatus (strain IBT 40285).